The chain runs to 438 residues: Cysteine--tRNA ligase (438 aa).

Zn(2+) is bound at residue Cys28. Residues 30–40 carry the 'HIGH' region motif; that stretch reads PTVYNHLHLGN. Residues Cys207, His232, and Glu236 each coordinate Zn(2+). The 'KMSKS' region signature appears at 264–268; the sequence is KMSKS. Lys267 is an ATP binding site.

Belongs to the class-I aminoacyl-tRNA synthetase family. In terms of assembly, monomer. Zn(2+) serves as cofactor.

The protein localises to the cytoplasm. It catalyses the reaction tRNA(Cys) + L-cysteine + ATP = L-cysteinyl-tRNA(Cys) + AMP + diphosphate. The sequence is that of Cysteine--tRNA ligase from Onion yellows phytoplasma (strain OY-M).